We begin with the raw amino-acid sequence, 515 residues long: Ent-isokaurene C2/C3-hydroxylase (515 aa).

Residues 5–25 traverse the membrane as a helical segment; the sequence is LILDLCLSALFVVVLSKLVSS. A heme-binding site is contributed by Cys452.

It belongs to the cytochrome P450 family. Heme is required as a cofactor.

Its subcellular location is the membrane. The enzyme catalyses ent-isokaurene + 2 reduced [NADPH--hemoprotein reductase] + 2 O2 = ent-isokaurene-2beta,3beta-diol + 2 oxidized [NADPH--hemoprotein reductase] + 2 H2O + 2 H(+). In terms of biological role, enzyme of the diterpenoid metabolism involved in the biosynthesis of antibacterial oryzalides such as phytocassane. This chain is Ent-isokaurene C2/C3-hydroxylase (CYP71Z6), found in Oryza sativa subsp. japonica (Rice).